The primary structure comprises 438 residues: Coenzyme A disulfide reductase (438 aa).

8-33 is a binding site for FAD; sequence GAVAGGATCASQIRRLDKESDIIIFE. Residues T15, Q19, R22, S39, and N42 each coordinate substrate. C43 functions as the Nucleophile in the catalytic mechanism. Residue C43 is the Redox-active of the active site. K71 is a substrate binding site. 151–166 provides a ligand contact to NADP(+); it reads VLVVGAGYVSLEVLEN. Residue 267-277 coordinates FAD; sequence TNVPNIYAIGD. Residue H299 participates in substrate binding. Y419 is an FAD binding site. K427 is a substrate binding site.

It belongs to the class-III pyridine nucleotide-disulfide oxidoreductase family. Homodimer. FAD is required as a cofactor.

The enzyme catalyses NADP(+) + 2 CoA = CoA-disulfide + NADPH + H(+). Catalyzes specifically the NADPH-dependent reduction of coenzyme A disulfide. The protein is Coenzyme A disulfide reductase of Staphylococcus aureus (strain COL).